A 916-amino-acid polypeptide reads, in one-letter code: Chitin synthase B (916 aa).

2 disordered regions span residues 1 to 84 (MAYQ…AGFH) and 114 to 141 (SPYA…GGGL). N-linked (GlcNAc...) asparagine glycosylation occurs at Asn18. The span at 60 to 75 (RGTSPVRPTSGYSLTE) shows a compositional bias: polar residues. N-linked (GlcNAc...) asparagine glycosylation occurs at Asn546. 7 consecutive transmembrane segments (helical) span residues 572 to 594 (MFFL…FSLA), 628 to 648 (IINT…FILA), 663 to 683 (SFVV…YLVV), 715 to 735 (IIII…FMYL), 743 to 763 (SFPA…VYAF), 845 to 865 (LVTL…SDGM), and 884 to 904 (ALLW…CWFL).

This sequence belongs to the chitin synthase family. Class III subfamily.

It is found in the cell membrane. The enzyme catalyses [(1-&gt;4)-N-acetyl-beta-D-glucosaminyl](n) + UDP-N-acetyl-alpha-D-glucosamine = [(1-&gt;4)-N-acetyl-beta-D-glucosaminyl](n+1) + UDP + H(+). In terms of biological role, polymerizes chitin, a structural polymer of the cell wall and septum, by transferring the sugar moiety of UDP-GlcNAc to the non-reducing end of the growing chitin polymer. Involved in hyphal growth and more particularly in branching. The protein is Chitin synthase B of Aspergillus oryzae (strain ATCC 42149 / RIB 40) (Yellow koji mold).